We begin with the raw amino-acid sequence, 563 residues long: NAD-dependent malic enzyme (563 aa).

Residue Y101 is the Proton donor of the active site. R154 provides a ligand contact to NAD(+). K172 functions as the Proton acceptor in the catalytic mechanism. A divalent metal cation-binding residues include E243, D244, and D267. NAD(+) is bound by residues D267 and N416.

The protein belongs to the malic enzymes family. In terms of assembly, homotetramer. Mg(2+) is required as a cofactor. The cofactor is Mn(2+).

It carries out the reaction (S)-malate + NAD(+) = pyruvate + CO2 + NADH. The enzyme catalyses oxaloacetate + H(+) = pyruvate + CO2. In Pseudomonas syringae pv. tomato (strain ATCC BAA-871 / DC3000), this protein is NAD-dependent malic enzyme.